Here is a 324-residue protein sequence, read N- to C-terminus: Delta-aminolevulinic acid dehydratase (324 aa).

Positions 118, 120, and 128 each coordinate Zn(2+). The Schiff-base intermediate with substrate role is filled by lysine 195. 2 residues coordinate 5-aminolevulinate: arginine 205 and arginine 217. Glutamate 233 is a binding site for Mg(2+). Lysine 248 serves as the catalytic Schiff-base intermediate with substrate. 5-aminolevulinate contacts are provided by serine 274 and tyrosine 313.

The protein belongs to the ALAD family. In terms of assembly, homooctamer. The cofactor is Zn(2+).

It carries out the reaction 2 5-aminolevulinate = porphobilinogen + 2 H2O + H(+). The protein operates within porphyrin-containing compound metabolism; protoporphyrin-IX biosynthesis; coproporphyrinogen-III from 5-aminolevulinate: step 1/4. Catalyzes an early step in the biosynthesis of tetrapyrroles. Binds two molecules of 5-aminolevulinate per subunit, each at a distinct site, and catalyzes their condensation to form porphobilinogen. This is Delta-aminolevulinic acid dehydratase (hemB) from Staphylococcus aureus (strain NCTC 8325 / PS 47).